The chain runs to 311 residues: Large ribosomal subunit protein uL18 (311 aa).

This sequence belongs to the universal ribosomal protein uL18 family. As to quaternary structure, component of the large ribosomal subunit (LSU).

Its subcellular location is the cytoplasm. It is found in the nucleus. In terms of biological role, component of the ribosome, a large ribonucleoprotein complex responsible for the synthesis of proteins in the cell. The small ribosomal subunit (SSU) binds messenger RNAs (mRNAs) and translates the encoded message by selecting cognate aminoacyl-transfer RNA (tRNA) molecules. The large subunit (LSU) contains the ribosomal catalytic site termed the peptidyl transferase center (PTC), which catalyzes the formation of peptide bonds, thereby polymerizing the amino acids delivered by tRNAs into a polypeptide chain. The nascent polypeptides leave the ribosome through a tunnel in the LSU and interact with protein factors that function in enzymatic processing, targeting, and the membrane insertion of nascent chains at the exit of the ribosomal tunnel. The chain is Large ribosomal subunit protein uL18 (RPL5) from Eimeria tenella (Coccidian parasite).